Consider the following 1086-residue polypeptide: DNA polymerase delta catalytic subunit (1086 aa).

Positions Met1–Ala64 are disordered. Residues Glu29–Ser58 are compositionally biased toward basic and acidic residues. 4 residues coordinate Zn(2+): Cys993, Cys996, Cys1008, and Cys1011. Residues Cys993 to Cys1011 form a CysA-type zinc finger. Residues Cys1040, Cys1043, Cys1053, and Cys1058 each contribute to the [4Fe-4S] cluster site. The CysB motif motif lies at Cys1040–Cys1058.

This sequence belongs to the DNA polymerase type-B family. In terms of assembly, heterotetramer that consist of the pol3, cdc1, cdc27 and cdm1 subunits. The pol3 subunit contains the polymerase active site and most likely the active site for the 3'-5' exonuclease activity. Requires [4Fe-4S] cluster as cofactor.

It localises to the nucleus. The enzyme catalyses DNA(n) + a 2'-deoxyribonucleoside 5'-triphosphate = DNA(n+1) + diphosphate. Catalytic component of DNA polymerase delta (DNA polymerase III) which participates in chromosomal DNA replication. Required during synthesis of the lagging DNA strands at the replication fork, binds at/or near replication origins and moves along DNA with the replication fork. Participates in leading strand synthesis during replication initiation and termination. Has 3'-5' proofreading exonuclease activity that corrects errors arising during DNA replication. This chain is DNA polymerase delta catalytic subunit (pol3), found in Schizosaccharomyces pombe (strain 972 / ATCC 24843) (Fission yeast).